Consider the following 319-residue polypeptide: ATP-dependent 6-phosphofructokinase (319 aa).

ATP is bound at residue glycine 11. 21-25 (RAVVR) provides a ligand contact to ADP. ATP contacts are provided by residues 72-73 (RC) and 102-105 (GNGS). Mg(2+) is bound at residue asparagine 103. Residue 125 to 127 (TID) participates in substrate binding. The Proton acceptor role is filled by aspartate 127. An ADP-binding site is contributed by arginine 154. Residues arginine 162 and 169 to 171 (MGR) each bind substrate. Residues 185-187 (GAE), arginine 211, and 213-215 (KMH) contribute to the ADP site. Substrate contacts are provided by residues glutamate 222, arginine 243, and 249–252 (HIQR).

Belongs to the phosphofructokinase type A (PFKA) family. ATP-dependent PFK group I subfamily. Prokaryotic clade 'B1' sub-subfamily. As to quaternary structure, homotetramer. Mg(2+) is required as a cofactor.

It is found in the cytoplasm. It catalyses the reaction beta-D-fructose 6-phosphate + ATP = beta-D-fructose 1,6-bisphosphate + ADP + H(+). The protein operates within carbohydrate degradation; glycolysis; D-glyceraldehyde 3-phosphate and glycerone phosphate from D-glucose: step 3/4. Its activity is regulated as follows. Allosterically activated by ADP and other diphosphonucleosides, and allosterically inhibited by phosphoenolpyruvate. Its function is as follows. Catalyzes the phosphorylation of D-fructose 6-phosphate to fructose 1,6-bisphosphate by ATP, the first committing step of glycolysis. This is ATP-dependent 6-phosphofructokinase from Clostridium acetobutylicum (strain ATCC 824 / DSM 792 / JCM 1419 / IAM 19013 / LMG 5710 / NBRC 13948 / NRRL B-527 / VKM B-1787 / 2291 / W).